We begin with the raw amino-acid sequence, 432 residues long: Trigger factor (432 aa).

Positions 161 to 246 (EDRVTIDFTG…LKKVEERELP (86 aa)) constitute a PPIase FKBP-type domain.

It belongs to the FKBP-type PPIase family. Tig subfamily.

Its subcellular location is the cytoplasm. The catalysed reaction is [protein]-peptidylproline (omega=180) = [protein]-peptidylproline (omega=0). Functionally, involved in protein export. Acts as a chaperone by maintaining the newly synthesized protein in an open conformation. Functions as a peptidyl-prolyl cis-trans isomerase. This Klebsiella pneumoniae (strain 342) protein is Trigger factor.